Consider the following 354-residue polypeptide: Probable N-acetylmuramoyl-L-alanine amidase (354 aa).

The signal sequence occupies residues methionine 1 to alanine 39. Positions leucine 40–threonine 152 constitute an N-acetylmuramoyl-L-alanine amidase domain.

This sequence belongs to the N-acetylmuramoyl-L-alanine amidase 2 family.

The protein localises to the secreted. The enzyme catalyses Hydrolyzes the link between N-acetylmuramoyl residues and L-amino acid residues in certain cell-wall glycopeptides.. This chain is Probable N-acetylmuramoyl-L-alanine amidase, found in Bacillus licheniformis.